Reading from the N-terminus, the 630-residue chain is Chaperone protein DnaK (630 aa).

Residue threonine 198 is modified to Phosphothreonine; by autocatalysis. A disordered region spans residues 604 to 630 (AAAAPGEEAPKDDDVVDAEFSEVDDKK). Residues 617–630 (DVVDAEFSEVDDKK) show a composition bias toward acidic residues.

It belongs to the heat shock protein 70 family.

Acts as a chaperone. The protein is Chaperone protein DnaK of Rhizorhabdus wittichii (strain DSM 6014 / CCUG 31198 / JCM 15750 / NBRC 105917 / EY 4224 / RW1) (Sphingomonas wittichii).